We begin with the raw amino-acid sequence, 295 residues long: Pyridoxal 5'-phosphate synthase subunit PdxS (295 aa).

Aspartate 25 contacts D-ribose 5-phosphate. Lysine 82 serves as the catalytic Schiff-base intermediate with D-ribose 5-phosphate. Glycine 154 provides a ligand contact to D-ribose 5-phosphate. A D-glyceraldehyde 3-phosphate-binding site is contributed by arginine 166. Residues glycine 215 and 236–237 (GS) contribute to the D-ribose 5-phosphate site.

This sequence belongs to the PdxS/SNZ family. As to quaternary structure, in the presence of PdxT, forms a dodecamer of heterodimers.

It carries out the reaction aldehydo-D-ribose 5-phosphate + D-glyceraldehyde 3-phosphate + L-glutamine = pyridoxal 5'-phosphate + L-glutamate + phosphate + 3 H2O + H(+). It functions in the pathway cofactor biosynthesis; pyridoxal 5'-phosphate biosynthesis. Its function is as follows. Catalyzes the formation of pyridoxal 5'-phosphate from ribose 5-phosphate (RBP), glyceraldehyde 3-phosphate (G3P) and ammonia. The ammonia is provided by the PdxT subunit. Can also use ribulose 5-phosphate and dihydroxyacetone phosphate as substrates, resulting from enzyme-catalyzed isomerization of RBP and G3P, respectively. The chain is Pyridoxal 5'-phosphate synthase subunit PdxS from Staphylococcus saprophyticus subsp. saprophyticus (strain ATCC 15305 / DSM 20229 / NCIMB 8711 / NCTC 7292 / S-41).